The primary structure comprises 153 residues: Small ribosomal subunit protein uS5c (153 aa).

The S5 DRBM domain occupies 11–74 (WQERVIQIRR…VDAKKQLINI (64 aa)).

This sequence belongs to the universal ribosomal protein uS5 family. Part of the 30S ribosomal subunit. Contacts protein S4.

Its subcellular location is the plastid. It localises to the chloroplast. Its function is as follows. With S4 and S12 plays an important role in translational accuracy. This chain is Small ribosomal subunit protein uS5c (rps5), found in Cyanidioschyzon merolae (strain NIES-3377 / 10D) (Unicellular red alga).